Here is a 332-residue protein sequence, read N- to C-terminus: Cell division protein ZipA (332 aa).

The Periplasmic portion of the chain corresponds to 1–6 (MMQDLR). A helical transmembrane segment spans residues 7–27 (LILIVVGAIAIIALLLHGLWT). Residues 28–332 (SRKERSSLFR…RIRDVLKANA (305 aa)) lie on the Cytoplasmic side of the membrane. Over residues 40–51 (PVKRAKKARDET) the composition is skewed to basic and acidic residues. Residues 40 to 189 (PVKRAKKARD…VQPAPQQPAE (150 aa)) form a disordered region. The segment covering 76–88 (SFDSASVDSSSFD) has biased composition (low complexity). The segment covering 93–105 (AREDVRSEAKSPF) has biased composition (basic and acidic residues).

Belongs to the ZipA family. As to quaternary structure, interacts with FtsZ via their C-terminal domains.

It localises to the cell inner membrane. Essential cell division protein that stabilizes the FtsZ protofilaments by cross-linking them and that serves as a cytoplasmic membrane anchor for the Z ring. Also required for the recruitment to the septal ring of downstream cell division proteins. This Pectobacterium atrosepticum (strain SCRI 1043 / ATCC BAA-672) (Erwinia carotovora subsp. atroseptica) protein is Cell division protein ZipA.